A 217-amino-acid chain; its full sequence is Cytidylate kinase (217 aa).

Residue 9–17 (GPSSSGKSS) coordinates ATP.

This sequence belongs to the cytidylate kinase family. Type 1 subfamily.

It localises to the cytoplasm. The enzyme catalyses CMP + ATP = CDP + ADP. It catalyses the reaction dCMP + ATP = dCDP + ADP. The protein is Cytidylate kinase of Mycoplasma genitalium (strain ATCC 33530 / DSM 19775 / NCTC 10195 / G37) (Mycoplasmoides genitalium).